Here is a 315-residue protein sequence, read N- to C-terminus: Solute carrier family 25 member 32 (315 aa).

3 Solcar repeats span residues His-20–Tyr-109, Leu-118–Lys-209, and Leu-222–Phe-306. A run of 6 helical transmembrane segments spans residues Leu-26–Leu-43, Val-89–Ile-106, Tyr-123–Val-143, Phe-186–Tyr-203, Tyr-227–Tyr-243, and Gly-281–Tyr-300.

It belongs to the mitochondrial carrier (TC 2.A.29) family.

Its subcellular location is the mitochondrion inner membrane. It catalyses the reaction FAD(in) = FAD(out). Its function is as follows. Facilitates flavin adenine dinucleotide (FAD) translocation across the mitochondrial inner membrane into the mitochondrial matrix where it acts as a redox cofactor to assist flavoenzyme activities in fundamental metabolic processes including fatty acid beta-oxidation, amino acid and choline metabolism as well as mitochondrial electron transportation. In particular, provides FAD to DLD dehydrogenase of the glycine cleavage system, part of mitochondrial one-carbon metabolic pathway involved in neural tube closure in early embryogenesis. The protein is Solute carrier family 25 member 32 of Macaca fascicularis (Crab-eating macaque).